Here is a 442-residue protein sequence, read N- to C-terminus: Protein UNUSUAL FLORAL ORGANS (442 aa).

The segment at 1 to 85 (MDSTVFINNP…RFYSLLFSNT (85 aa)) is interaction with SKP1A. In terms of domain architecture, F-box spans 44–90 (GRIWSKLPPPLLDRVIAFLPPPAFFRTRCVCKRFYSLLFSNTFLETY).

As to quaternary structure, part of a putative SCF (ASK/Cullin/F-box) ubiquitin ligase complex. Interacts with SKP1A/ASK1, SKP1B/ASK2 and ASK11.

Its subcellular location is the nucleus. The protein operates within protein modification; protein ubiquitination. Its function is as follows. Component of SCF(ASK-cullin-F-box) E3 ubiquitin ligase complexes, which may mediate the ubiquitination and subsequent proteasomal degradation of target proteins. Considered as a meristem identity factor required for normal growth of the young floral meristem. Acts together with LEAFY to positively regulate the B class floral homeotic genes APETALA3 and PISTILLATA. In this way, operates as a region-specific regulator for petal and stamen development. Alternatively, may play a role as a negative regulator of the C class floral homeotic genes. Interacts together with the SKP1-like protein ASK1 to form a ubiquitin E3 ligase complex and could indirectly promote the ubiquitination and degradation of specific proteins controlling the floral primordia development like repressors of B class floral homeotic genes. The protein is Protein UNUSUAL FLORAL ORGANS (UFO) of Arabidopsis thaliana (Mouse-ear cress).